The sequence spans 260 residues: Fructose import ATP-binding protein FrcA (260 aa).

The ABC transporter domain occupies leucine 7–lysine 251. Glycine 39 to serine 46 contributes to the ATP binding site.

It belongs to the ABC transporter superfamily. In terms of assembly, the complex is composed of two ATP-binding proteins (FrcA), two transmembrane proteins (FrcC) and a solute-binding protein (FrcB).

The protein resides in the cell inner membrane. It catalyses the reaction D-fructose(out) + ATP + H2O = D-fructose(in) + ADP + phosphate + H(+). In terms of biological role, part of the high-affinity ABC transporter complex FrcBCA involved in fructose uptake. Is also a high-affinity transporter for ribose and mannose. Responsible for energy coupling to the transport system. In Rhizobium meliloti (Ensifer meliloti), this protein is Fructose import ATP-binding protein FrcA.